The primary structure comprises 434 residues: Bcl-2-like protein 13 (434 aa).

The BH4 motif lies at 14–30; that stretch reads ETKYVVLSYLGLLSQEK. Ser-35 carries the post-translational modification Phosphoserine. The short motif at 97–113 is the BH3 element; sequence IEDCLAHLGERVSQDLK. The BH1 motif lies at 144–154; sequence ASGWNKLLVPL. The BH2 signature appears at 190–203; that stretch reads FIIQQGGWGSVFSL. Residues 224 to 245 form a disordered region; that stretch reads LPSDNSGQVSPPESPTVTTSWQ. The segment covering 226-245 has biased composition (polar residues); the sequence is SDNSGQVSPPESPTVTTSWQ. One copy of the A repeat lies at 243 to 253; it reads SWQSESLPVSL. Ser-256, Ser-258, Ser-300, Ser-343, Ser-347, Ser-377, and Ser-387 each carry phosphoserine. The A; approximate repeat unit spans residues 258 to 268; that stretch reads SWHTESLPVSL. The tract at residues 282 to 303 is disordered; it reads EVKSLDSSGAGEKSENNSSNSD. The segment at 363-398 is disordered; that stretch reads RPEAVERAEGAAQLSEERAGSRKKSHTGEAAAVRGA. Residues 365 to 382 are compositionally biased toward basic and acidic residues; the sequence is EAVERAEGAAQLSEERAG. Residues 409–429 form a helical membrane-spanning segment; it reads VLLFGGAAAVAILAVAVGVAL.

It belongs to the Bcl-2 family. In terms of assembly, monomer.

It is found in the mitochondrion membrane. Its function is as follows. May promote the activation of caspase-3 and apoptosis. In Mus musculus (Mouse), this protein is Bcl-2-like protein 13 (Bcl2l13).